The following is a 381-amino-acid chain: Hydrogenase nickel incorporation protein HupN (381 aa).

Over 1 to 39 the chain is Cytoplasmic; the sequence is MLPFSMTGLEKDHTRGVLILANAHRRSERSRTASCAGPA. Residues 40–60 form a helical membrane-spanning segment; that stretch reads VLFGGLITANIVAWAWAFALF. At 61-63 the chain is on the periplasmic side; it reads ADR. A helical transmembrane segment spans residues 64 to 84; that stretch reads PVVMATALLAWVFGLRHAVDA. The Cytoplasmic segment spans residues 85–110; it reads DHIAAIDNVVRSLMQTGGTPRSAGLY. Residues 111 to 131 form a helical membrane-spanning segment; it reads FALGHSSVVVVATMLLALGVV. Residues 132 to 149 are Periplasmic-facing; the sequence is SLGGDGLLKEIGSFIGAS. The chain crosses the membrane as a helical span at residues 150–170; it reads VSALFLLVIAAINLAIFASLW. Residues 171–215 are Cytoplasmic-facing; it reads RTFRKAREQGIRDAAGLDALLAHRGILVRLLGPMFRLVTKPWHMY. Residues 216–236 form a helical membrane-spanning segment; it reads PLGFLFGLGFDTATEIGLLSI. The Periplasmic segment spans residues 237–243; the sequence is SASEAAR. The chain crosses the membrane as a helical span at residues 244–264; that stretch reads GASLADVMVFPALFAAGMALV. The Cytoplasmic segment spans residues 265–292; that stretch reads DTADSTLMVSAYRWAFVDPMRKLWYNLT. The chain crosses the membrane as a helical span at residues 293 to 313; sequence ITGASVAVALFIGGIEALGLI. Residues 314-333 lie on the Periplasmic side of the membrane; it reads GNRLDLSGGVWTLIDALNES. Residues 334-354 form a helical membrane-spanning segment; that stretch reads LANVGLAVIALFAIAWLLSIV. Residues 355–381 lie on the Cytoplasmic side of the membrane; it reads LYRRLIAGSSGLADTEVLECADATEAV.

It belongs to the NiCoT transporter (TC 2.A.52) family.

The protein resides in the cell inner membrane. In terms of biological role, involved in nickel incorporation/metabolism into the hydrogenase apoprotein. The protein is Hydrogenase nickel incorporation protein HupN (hupN) of Bradyrhizobium diazoefficiens (strain JCM 10833 / BCRC 13528 / IAM 13628 / NBRC 14792 / USDA 110).